The chain runs to 207 residues: Fibronectin type III domain-containing protein 5b (207 aa).

The N-terminal stretch at 1-26 (MWGIKGSFAVLLLLFLAYIFASSVNA) is a signal peptide. The Extracellular segment spans residues 27 to 146 (DSLSAPLNVT…EEVGQAAQLR (120 aa)). A Fibronectin type-III domain is found at 31-122 (APLNVTIKAL…EPVLFRTPKE (92 aa)). 2 N-linked (GlcNAc...) asparagine glycosylation sites follow: N34 and N79. A helical transmembrane segment spans residues 147 to 167 (AGELIIIVVVLVMWAGVIALF). The Cytoplasmic portion of the chain corresponds to 168 to 207 (CRQYDIIKDNEPNNNKDKAKNSSECSTPEHPTGGLLRSKV). A compositionally biased stretch (basic and acidic residues) spans 178-188 (EPNNNKDKAKN). Positions 178 to 207 (EPNNNKDKAKNSSECSTPEHPTGGLLRSKV) are disordered. A Microbody targeting signal motif is present at residues 205–207 (SKV).

In terms of assembly, dimer; may exist in other oligomeric forms. In terms of processing, the extracellular domain is cleaved and released from the cell membrane.

Its subcellular location is the cell membrane. It localises to the peroxisome membrane. It is found in the secreted. May mediate beneficial effects of muscular exercise. This Danio rerio (Zebrafish) protein is Fibronectin type III domain-containing protein 5b (fndc5b).